Here is a 578-residue protein sequence, read N- to C-terminus: Arginine--tRNA ligase (578 aa).

The 'HIGH' region motif lies at 125–135; it reads PNVAKKMHVGH.

Belongs to the class-I aminoacyl-tRNA synthetase family. Monomer.

It is found in the cytoplasm. It catalyses the reaction tRNA(Arg) + L-arginine + ATP = L-arginyl-tRNA(Arg) + AMP + diphosphate. This is Arginine--tRNA ligase from Buchnera aphidicola subsp. Baizongia pistaciae (strain Bp).